The sequence spans 39 residues: Potassium channel toxin alpha-KTx 2.23 (39 aa).

Intrachain disulfides connect Cys7–Cys29, Cys13–Cys34, and Cys17–Cys36.

Expressed by the venom gland.

Its subcellular location is the secreted. Functionally, blocks human voltage-gated potassium (Kv) channels Kv1.1/KCNA1, Kv1.2/KCNA2 and Kv1.3/KCNA3. The protein is Potassium channel toxin alpha-KTx 2.23 of Centruroides bonito (Scorpion).